We begin with the raw amino-acid sequence, 317 residues long: Non-structural protein 2 (317 aa).

ATP-binding positions include 107–109 (SVR), Lys188, and 221–223 (HGK). The tract at residues 205–241 (LVAELRWQYNRFAVITHGKGHYRVVKYSSVANHADRV) is RNA-binding. Residue His225 is the For NTPase and RTPase activities of the active site. Arg227 is an ATP binding site.

This sequence belongs to the rotavirus NSP2 family. In terms of assembly, homooctamer. Interacts with VP1; this interaction is weak. Interacts with NSP5; this interaction leads to up-regulation of NSP5 phosphorylation and formation of viral factories. Interacts with host DCP1A, DCP1B, DDX6, EDC4 and EIF2S1/eIF2-alpha; these interactions are probably part of the sequestration of some host SGs and PBs proteins in viral factories. Mg(2+) is required as a cofactor.

It is found in the host cytoplasm. Functionally, participates in replication and packaging of the viral genome. Plays a crucial role, together with NSP5, in the formation of virus factories (viroplasms), which are large inclusions in the host cytoplasm where replication intermediates are assembled and viral RNA replication takes place. Displays ssRNA binding, NTPase, RNA triphosphatase (RTPase) and ATP-independent helix-unwinding activities. The unwinding activity may prepare and organize plus-strand RNAs for packaging and replication by removing interfering secondary structures. The RTPase activity plays a role in the removal of the gamma-phosphate from the rotavirus RNA minus strands of dsRNA genome segments. Participates in the selective exclusion of host proteins from stress granules (SG) and P bodies (PB). Also participates in the sequestration of these remodeled organelles in viral factories. In Homo sapiens (Human), this protein is Non-structural protein 2.